A 230-amino-acid chain; its full sequence is ATP synthase subunit a (230 aa).

The next 5 membrane-spanning stretches (helical) occupy residues 17–37, 78–98, 107–127, 165–187, and 198–218; these read LPIT…FIMA, IFPF…IGVI, DLSV…WFGI, LFGN…GFLV, and EAII…AGGI.

The protein belongs to the ATPase A chain family. F-type ATPases have 2 components, CF(1) - the catalytic core - and CF(0) - the membrane proton channel. CF(1) has five subunits: alpha(3), beta(3), gamma(1), delta(1), epsilon(1). CF(0) has three main subunits: a(1), b(2) and c(9-12). The alpha and beta chains form an alternating ring which encloses part of the gamma chain. CF(1) is attached to CF(0) by a central stalk formed by the gamma and epsilon chains, while a peripheral stalk is formed by the delta and b chains.

It is found in the cell inner membrane. Functionally, key component of the proton channel; it plays a direct role in the translocation of protons across the membrane. This Legionella pneumophila subsp. pneumophila (strain Philadelphia 1 / ATCC 33152 / DSM 7513) protein is ATP synthase subunit a.